The following is a 344-amino-acid chain: Dihydroorotase (344 aa).

Zn(2+) is bound by residues H13 and H15. Residues 15-17 and N41 contribute to the substrate site; that span reads HLR. Zn(2+) is bound by residues K99, H136, and H174. K99 carries the post-translational modification N6-carboxylysine. H136 is a binding site for substrate. L219 provides a ligand contact to substrate. D247 contributes to the Zn(2+) binding site. The active site involves D247. H251 and A263 together coordinate substrate.

Belongs to the metallo-dependent hydrolases superfamily. DHOase family. Class II DHOase subfamily. Homodimer. It depends on Zn(2+) as a cofactor.

The enzyme catalyses (S)-dihydroorotate + H2O = N-carbamoyl-L-aspartate + H(+). It functions in the pathway pyrimidine metabolism; UMP biosynthesis via de novo pathway; (S)-dihydroorotate from bicarbonate: step 3/3. Functionally, catalyzes the reversible cyclization of carbamoyl aspartate to dihydroorotate. The polypeptide is Dihydroorotase (Idiomarina loihiensis (strain ATCC BAA-735 / DSM 15497 / L2-TR)).